We begin with the raw amino-acid sequence, 312 residues long: Probable phytanoyl-CoA dioxygenase (312 aa).

2-oxoglutarate is bound by residues Lys-84, Met-124, 142-144 (HQD), and Trp-160. Positions 142 and 144 each coordinate Fe cation. Fe cation is bound at residue His-231. Positions 233 and 242 each coordinate 2-oxoglutarate.

This sequence belongs to the PhyH family. Fe cation is required as a cofactor. L-ascorbate serves as cofactor.

The enzyme catalyses phytanoyl-CoA + 2-oxoglutarate + O2 = 2-hydroxyphytanoyl-CoA + succinate + CO2. The protein operates within lipid metabolism; fatty acid metabolism. In terms of biological role, converts phytanoyl-CoA to 2-hydroxyphytanoyl-CoA. This is Probable phytanoyl-CoA dioxygenase from Caenorhabditis elegans.